A 264-amino-acid polypeptide reads, in one-letter code: DNA repair protein RecO (264 aa).

Belongs to the RecO family.

Its function is as follows. Involved in DNA repair and RecF pathway recombination. This is DNA repair protein RecO from Prosthecochloris aestuarii (strain DSM 271 / SK 413).